Here is a 705-residue protein sequence, read N- to C-terminus: Elongation factor G (705 aa).

The 282-residue stretch at 8-289 (VNYRNIGISA…TVINYLPSPK (282 aa)) folds into the tr-type G domain. GTP contacts are provided by residues 17-24 (AHIDAGKT), 88-92 (DTPGH), and 142-145 (NKMD).

Belongs to the TRAFAC class translation factor GTPase superfamily. Classic translation factor GTPase family. EF-G/EF-2 subfamily.

It is found in the cytoplasm. Its function is as follows. Catalyzes the GTP-dependent ribosomal translocation step during translation elongation. During this step, the ribosome changes from the pre-translocational (PRE) to the post-translocational (POST) state as the newly formed A-site-bound peptidyl-tRNA and P-site-bound deacylated tRNA move to the P and E sites, respectively. Catalyzes the coordinated movement of the two tRNA molecules, the mRNA and conformational changes in the ribosome. This chain is Elongation factor G, found in Wigglesworthia glossinidia brevipalpis.